Reading from the N-terminus, the 152-residue chain is UPF0178 protein SAS0646 (152 aa).

It belongs to the UPF0178 family.

This chain is UPF0178 protein SAS0646, found in Staphylococcus aureus (strain MSSA476).